The following is a 411-amino-acid chain: Serine hydroxymethyltransferase (411 aa).

120–122 contacts (6S)-5,6,7,8-tetrahydrofolate; sequence GHL. Residue lysine 225 is modified to N6-(pyridoxal phosphate)lysine. 350 to 352 contributes to the (6S)-5,6,7,8-tetrahydrofolate binding site; that stretch reads SPF.

This sequence belongs to the SHMT family. In terms of assembly, homodimer. It depends on pyridoxal 5'-phosphate as a cofactor.

The protein localises to the cytoplasm. The enzyme catalyses (6R)-5,10-methylene-5,6,7,8-tetrahydrofolate + glycine + H2O = (6S)-5,6,7,8-tetrahydrofolate + L-serine. It functions in the pathway one-carbon metabolism; tetrahydrofolate interconversion. The protein operates within amino-acid biosynthesis; glycine biosynthesis; glycine from L-serine: step 1/1. In terms of biological role, catalyzes the reversible interconversion of serine and glycine with tetrahydrofolate (THF) serving as the one-carbon carrier. This reaction serves as the major source of one-carbon groups required for the biosynthesis of purines, thymidylate, methionine, and other important biomolecules. Also exhibits THF-independent aldolase activity toward beta-hydroxyamino acids, producing glycine and aldehydes, via a retro-aldol mechanism. This Lactobacillus acidophilus (strain ATCC 700396 / NCK56 / N2 / NCFM) protein is Serine hydroxymethyltransferase.